A 204-amino-acid polypeptide reads, in one-letter code: Large ribosomal subunit protein uL4 (204 aa).

Positions 49–75 (TKGRSDVSGGGKKPWRQKGRGGARAGS) are disordered.

It belongs to the universal ribosomal protein uL4 family. As to quaternary structure, part of the 50S ribosomal subunit.

One of the primary rRNA binding proteins, this protein initially binds near the 5'-end of the 23S rRNA. It is important during the early stages of 50S assembly. It makes multiple contacts with different domains of the 23S rRNA in the assembled 50S subunit and ribosome. Functionally, forms part of the polypeptide exit tunnel. The sequence is that of Large ribosomal subunit protein uL4 from Campylobacter lari (strain RM2100 / D67 / ATCC BAA-1060).